The following is a 145-amino-acid chain: Transcription antitermination protein NusB (145 aa).

The protein belongs to the NusB family.

Its function is as follows. Involved in transcription antitermination. Required for transcription of ribosomal RNA (rRNA) genes. Binds specifically to the boxA antiterminator sequence of the ribosomal RNA (rrn) operons. The protein is Transcription antitermination protein NusB of Paraburkholderia phymatum (strain DSM 17167 / CIP 108236 / LMG 21445 / STM815) (Burkholderia phymatum).